Consider the following 233-residue polypeptide: B-cell lymphoma/leukemia 10 (233 aa).

At methionine 1 the chain carries N-acetylmethionine. Residues leucine 13 to aspartate 101 enclose the CARD domain. Residues lysine 17, lysine 31, and lysine 63 each participate in a glycyl lysine isopeptide (Lys-Gly) (interchain with G-Cter in ubiquitin) cross-link. Phosphoserine is present on serine 138. A disordered region spans residues phenylalanine 187–glutamine 233. The segment covering proline 195–proline 205 has biased composition (pro residues).

Homomultimer; homooligomerized following recruitment by CARD domain-containing proteins that form a nucleating helical template that recruits BCL10 via CARD-CARD interaction. Self-associates by CARD-CARD interaction and interacts with other CARD-proteins such as CARD9, CARD10, CARD11 and CARD14. Forms a complex with CARD14 and MALT1; resulting in the formation of a CBM (CARD14-BCL10-MALT1) complex. Forms a complex with CARD11 and MALT1; resulting in the formation of a CBM (CARD11-BCL10-MALT1) complex. Forms a complex with CARD9 and MALT1; resulting in the formation of a CBM (CARD9-BCL10-MALT1) complex. Found in a membrane raft complex, at least composed of BCL10, CARD11, DPP4 and IKBKB. Binds caspase-9 with its C-terminal domain. Interacts with TRAF2 and BIRC2/c-IAP2. Interacts with PELI2 and SOCS3; these interactions may be mutually exclusive. Phosphorylated. Phosphorylation results in dissociation from TRAF2 and binding to BIRC2/c-IAP2. Phosphorylated by IKBKB/IKKB. Post-translationally, ubiquitinated via both 'Lys-63'-linked and linear ('Met-1'-linked) polyubiquitin chains in response to T-cell receptor (TCR) activation. Ubiquitination is recognized by IKBKG/NEMO, the regulatory subunit of I-kappa-B kinase (IKK), and is required for TCR-induced NF-kappa-B activation. Linear ubiquitination at Lys-17, Lys-31 and Lys-63 is mediated by RNF31/HOIP; linear ubiquitination is recognized with much higher affinity than 'Lys-63'-linked ubiquitin by IKBKG/NEMO. CARD11 is required for linear ubiquitination by HOIP by promoting the targeting of BCL10 to RNF31/HOIP. In terms of processing, proteolytically cleaved by MALT1; required for T-cell activation. Ubiquitous.

It localises to the cytoplasm. It is found in the perinuclear region. Its subcellular location is the membrane raft. Functionally, plays a key role in both adaptive and innate immune signaling by bridging CARD domain-containing proteins to immune activation. Acts by channeling adaptive and innate immune signaling downstream of CARD domain-containing proteins CARD9, CARD11 and CARD14 to activate NF-kappa-B and MAP kinase p38 (MAPK11, MAPK12, MAPK13 and/or MAPK14) pathways which stimulate expression of genes encoding pro-inflammatory cytokines and chemokines. Recruited by activated CARD domain-containing proteins: homooligomerized CARD domain-containing proteins form a nucleating helical template that recruits BCL10 via CARD-CARD interaction, thereby promoting polymerization of BCL10, subsequent recruitment of MALT1 and formation of a CBM complex. This leads to activation of NF-kappa-B and MAP kinase p38 (MAPK11, MAPK12, MAPK13 and/or MAPK14) pathways which stimulate expression of genes encoding pro-inflammatory cytokines and chemokines. Activated by CARD9 downstream of C-type lectin receptors; CARD9-mediated signals are essential for antifungal immunity. Activated by CARD11 downstream of T-cell receptor (TCR) and B-cell receptor (BCR). Promotes apoptosis, pro-caspase-9 maturation and activation of NF-kappa-B via NIK and IKK. The chain is B-cell lymphoma/leukemia 10 from Homo sapiens (Human).